The sequence spans 189 residues: Thymidine kinase (189 aa).

ATP is bound by residues 9–16 (GTMNSGKT) and 85–88 (DESQ). Glu86 acts as the Proton acceptor in catalysis. 4 residues coordinate Zn(2+): Cys143, Cys146, Cys180, and His183.

The protein belongs to the thymidine kinase family. In terms of assembly, homotetramer.

It localises to the cytoplasm. It carries out the reaction thymidine + ATP = dTMP + ADP + H(+). This Streptococcus pyogenes serotype M18 (strain MGAS8232) protein is Thymidine kinase.